The chain runs to 472 residues: MSMSSSNITSGFIDIATFDEIEKYMYGGPTATAYFVREIRKSTWFTQVPVPLSRNTGNAAFGQEWSVSISRAGDYLLQTWLRVNIPPVTLSGLLGNTYSLRWTKNLMHNLIREATITFNDLVAARFDNYHLDFWSAFTVPASKRNGYDNMIGNVSSLINPVAPGGTLGSVGGINLNLPLPFFFSRDTGVALPTAALPYNEMQINFNFRDWHELLILTNSALVPPASSYVSIVVGTHISAAPVLGPVQVWANYAIVSNEERRRMGCAIRDILIEQVQTAPRQNYVPLTNASPTFDIRFSHAIKALFFAVRNKTSAAEWSNYATSSPVVTGATVNYEPTGSFDPIANTTLIYENTNRLGAMGSDYFSLINPFYHAPTIPSFIGYHLYSYSLHFYDLDPMGSTNYGKLTNVFVVPAASSAAISAAGGTGGQAGSDYAQSYEFVIVAVNNNIVRIENSLVRNRRRWSREGPMVMVC.

This sequence belongs to the NCLDV major capsid protein family. In terms of assembly, homotrimer. The N-terminus is blocked.

The protein resides in the virion. In terms of biological role, major capsid protein that self assembles to form an icosahedral capsid. Represents around 50% of the total virion protein mass. The chain is Major capsid protein (MCP) from Simulium (IIV-22).